The chain runs to 723 residues: FACT complex subunit Ssrp1 (723 aa).

At serine 443 the chain carries Phosphoserine. 2 disordered regions span residues 459–564 (EARE…AFML) and 586–723 (AKKG…EASD). Composition is skewed to acidic residues over residues 464 to 478 (EEDD…ESTD) and 486 to 507 (NESD…DDSD). Positions 531–557 (KKEKKHKEKERTKKPSKKKKDSGKPKR) are enriched in basic residues. Residues 555-621 (PKRATTAFML…RYHDEMRNYK (67 aa)) constitute a DNA-binding region (HMG box). Residues 586-621 (AKKGGEMWKELKDKSKWEDAAAKDKQRYHDEMRNYK) show a composition bias toward basic and acidic residues. Serine 628 carries the post-translational modification Phosphoserine. Polar residues predominate over residues 644–656 (PSPSKKANTSGSG). Phosphoserine is present on residues serine 664 and serine 668. The span at 664–676 (SDDDSTSSDDEKD) shows a compositional bias: acidic residues. Threonine 669 bears the Phosphothreonine mark. 2 positions are modified to phosphoserine: serine 670 and serine 671. Basic and acidic residues predominate over residues 677 to 692 (NEPAKKKSKPPSDGDA). Acidic residues predominate over residues 702 to 723 (EPEESEEDSNASDEDEEDEASD).

It belongs to the SSRP1 family. Component of the FACT complex, a stable heterodimer of dre4/spt16 and Ssrp. Interacts with CHD1 and TRL/GAGA. In terms of tissue distribution, expressed at highest levels in nurse cells of the ovary.

It is found in the nucleus. It localises to the chromosome. The protein localises to the nucleolus. Functionally, component of the FACT complex, a general chromatin factor that acts to reorganize nucleosomes. The FACT complex is involved in multiple processes that require DNA as a template such as mRNA elongation, DNA replication and DNA repair. During transcription elongation the FACT complex acts as a histone chaperone that both destabilizes and restores nucleosomal structure. It facilitates the passage of RNA polymerase II and transcription by promoting the dissociation of one histone H2A-H2B dimer from the nucleosome, then subsequently promotes the reestablishment of the nucleosome following the passage of RNA polymerase II. Binds specifically to single-stranded DNA and RNA with highest affinity for nucleotides G and U. The FACT complex is required for expression of Hox genes. In Drosophila melanogaster (Fruit fly), this protein is FACT complex subunit Ssrp1 (Ssrp).